Consider the following 323-residue polypeptide: MSFASETKKELTHMDVSDSDAKVELAAFIRMNGAISFSNQLVIMDVQTENAAIARRMYQLLKDLYEVPIELLVRRKMKLKKNNVYIVRLKSGTRGILEDLRILEPPMTFTKSIDRGFVKKRSAKRAYLRGAFLASGSVNNPETSSYHLEIFSVYEEHNEAICALMNQFDLNARTLERKNGFITYLKEAEKITEFLSIIGATSALLHFEDVRIMRDMRNSVNRLVNCETANLNKTINAAVRQIDNIKYIQSTVGLEALPERLREIAALRIANEDVTLKELGEMLTTGQVSKSGINHRLRKLDQIAERLRSGETPSQVGLKVSNS.

Residues 275-309 constitute a DNA-binding region (H-T-H motif); the sequence is TLKELGEMLTTGQVSKSGINHRLRKLDQIAERLRS.

It belongs to the WhiA family.

Involved in cell division and chromosome segregation. This is Probable cell division protein WhiA from Listeria welshimeri serovar 6b (strain ATCC 35897 / DSM 20650 / CCUG 15529 / CIP 8149 / NCTC 11857 / SLCC 5334 / V8).